A 390-amino-acid polypeptide reads, in one-letter code: Lipid-A-disaccharide synthase (390 aa).

Belongs to the LpxB family.

The enzyme catalyses a lipid X + a UDP-2-N,3-O-bis[(3R)-3-hydroxyacyl]-alpha-D-glucosamine = a lipid A disaccharide + UDP + H(+). The protein operates within bacterial outer membrane biogenesis; LPS lipid A biosynthesis. Functionally, condensation of UDP-2,3-diacylglucosamine and 2,3-diacylglucosamine-1-phosphate to form lipid A disaccharide, a precursor of lipid A, a phosphorylated glycolipid that anchors the lipopolysaccharide to the outer membrane of the cell. In Haemophilus influenzae (strain PittGG), this protein is Lipid-A-disaccharide synthase.